Here is a 355-residue protein sequence, read N- to C-terminus: Chorismate synthase (355 aa).

An NADP(+)-binding site is contributed by Arg-48. FMN is bound by residues 125 to 127 (RSS), 239 to 240 (NA), Gly-280, 295 to 299 (KPVAT), and Arg-321.

This sequence belongs to the chorismate synthase family. As to quaternary structure, homotetramer. FMNH2 is required as a cofactor.

The enzyme catalyses 5-O-(1-carboxyvinyl)-3-phosphoshikimate = chorismate + phosphate. It participates in metabolic intermediate biosynthesis; chorismate biosynthesis; chorismate from D-erythrose 4-phosphate and phosphoenolpyruvate: step 7/7. Its function is as follows. Catalyzes the anti-1,4-elimination of the C-3 phosphate and the C-6 proR hydrogen from 5-enolpyruvylshikimate-3-phosphate (EPSP) to yield chorismate, which is the branch point compound that serves as the starting substrate for the three terminal pathways of aromatic amino acid biosynthesis. This reaction introduces a second double bond into the aromatic ring system. This chain is Chorismate synthase, found in Flavobacterium psychrophilum (strain ATCC 49511 / DSM 21280 / CIP 103535 / JIP02/86).